A 238-amino-acid chain; its full sequence is Ribonuclease PH (238 aa).

Phosphate-binding positions include Arg86 and 124–126 (GTR).

This sequence belongs to the RNase PH family. Homohexameric ring arranged as a trimer of dimers.

It carries out the reaction tRNA(n+1) + phosphate = tRNA(n) + a ribonucleoside 5'-diphosphate. Its function is as follows. Phosphorolytic 3'-5' exoribonuclease that plays an important role in tRNA 3'-end maturation. Removes nucleotide residues following the 3'-CCA terminus of tRNAs; can also add nucleotides to the ends of RNA molecules by using nucleoside diphosphates as substrates, but this may not be physiologically important. Probably plays a role in initiation of 16S rRNA degradation (leading to ribosome degradation) during starvation. In Edwardsiella ictaluri (strain 93-146), this protein is Ribonuclease PH.